A 147-amino-acid polypeptide reads, in one-letter code: Transcription antitermination protein NusB (147 aa).

Belongs to the NusB family.

Involved in transcription antitermination. Required for transcription of ribosomal RNA (rRNA) genes. Binds specifically to the boxA antiterminator sequence of the ribosomal RNA (rrn) operons. This Legionella pneumophila (strain Paris) protein is Transcription antitermination protein NusB.